The chain runs to 1239 residues: MTAETQTLNFGPEWLRALSSGGSVISPPLSPALPKYKLADFRYGREEMLALYVKDNKVPSDLLDKEFLPILNDEPLLPLALVSFTEEEQRNFSMSVNSAAVLRLTNRGSSGGGGTVVGVPRGRSSSRGRGRGRGESGFYQRSFDEVESGFGRGAREMHRSQSWEERGDRRFEKPARKEPDGVRGSAWREIPDRRRRFDYDLRESKDERGYRRPRSGSGIAEDERDSLPEWCLDDAEDETGTFDSSGAFLSSKPSKKVQKEPIPEEQEIDFHPSVDGAEVSDSDGSQTEEAKETDPVQSQNQDDDLSRNDHTVQAAPSPDHKTSSPVRRTDMTLDTAHQKAVSPHLSCKMDAKSQSPSSPPTPSKHKEDAASASHQGTREKAGPCLPHPQSPALSQRSPARQPDPHIVPAMSSVPVPQLDTPTVPIHSSVCAAPGMEPVPPEPDEDGLEHLEQQAQQMVAYLQDGTLDDDHLLTKVLDQRVKGPSLDNQQKWYYKDPQGEIQGPFSNREMAEWYQAGYFPMTLLLRRVCDETFQPLGDIFKKWGRVPFSTPPTPRLGDLDPERLSRQQEITALYQMRHLHYQQLLFQQQYAVLAQQQKVALSSQQQQLPLPLQPLSMRIPEHTVIPPVVRALSVPESTSLWELPPAPTQPAVWEGSSVWDLPVEPTTQGTTREQLAQMDKVKAAKMEQERREAELRAKQEEEEQHRRKEAEEERKRREEEELARRKQEEALQRQKELALQKQMEEEERQRKKELQLLEERMRQEEERKRLEEERRRQEEERRKQLEERKRAEEERRRREEEKKREEDERRQLEEIQRKQEEAARWAREEEEAVRLLLEEARLKAEEEERNKREEAQRQKELQRQRQQQQEALRRLQLQQQQQQLAQMKLPSSSTWGQQVTPSAASQSALSLAEIQKLEEERERQKLQEQRHQQQELKALQQQQQQQQQKIPGWGTMSKPTGTTKSLLEIQQEEAGQMQKNHQQPGRNRPANISLPVAPVVNNHISSPTVGNSGSSVWGSLNNNLSPQWSSDSMSSIWGSTDVKGSSVGFWDDAVKEVAPRNATSKNKNNASKSAGSNSRQSKKVEQEEKLLRLFQGANKCQDDFTQWCEKTMHAINTAHSLDVPTFVSFLREVESPYEVHDYVCAYLGDTPEAKDFSKQFIERRTKQKTSQHRPQQDVAWVTCQTSQANSQPITLEAVQCAGRKKKKQKMVRADPSLLGFSVNASSERLNMGEIETAEDY.

Disordered regions lie at residues threonine 105–glycine 184 and aspartate 206–alanine 409. The span at glycine 153 to glycine 181 shows a compositional bias: basic and acidic residues. Residues cysteine 231–glycine 240 show a composition bias toward acidic residues. Polar residues predominate over residues threonine 241–lysine 252. Basic and acidic residues-rich tracts occupy residues valine 257–proline 272 and proline 318–methionine 331. The region spanning glutamine 488–glycine 536 is the GYF domain. Basic and acidic residues predominate over residues aspartate 678–alanine 737. Disordered regions lie at residues aspartate 678 to arginine 749, glutamate 763 to glutamate 812, alanine 843 to glycine 960, and alanine 1057 to glutamine 1085. Residues alanine 843–arginine 862 are compositionally biased toward basic and acidic residues. Residues glutamine 863–glutamine 885 are compositionally biased toward low complexity. The span at leucine 888–proline 900 shows a compositional bias: polar residues. The span at serine 901 to isoleucine 913 shows a compositional bias: low complexity. The span at glutamine 914–glutamine 933 shows a compositional bias: basic and acidic residues. Composition is skewed to low complexity over residues glutamate 934–lysine 948 and asparagine 1060–serine 1077.

It belongs to the GIGYF family. In terms of assembly, component of the 4EHP-GYF2 complex.

In terms of biological role, key component of the 4EHP-GYF2 complex, a multiprotein complex that acts as a repressor of translation initiation. In association with EIF4E2, assists ribosome-associated quality control (RQC) by sequestering the mRNA cap, blocking ribosome initiation and decreasing the translational load on problematic messages. The chain is GRB10-interacting GYF protein 2 (gigyf2) from Xenopus laevis (African clawed frog).